The primary structure comprises 611 residues: Chaperonin 60 subunit beta 4, chloroplastic (611 aa).

A chloroplast-targeting transit peptide spans 1–37 (MAFSQAALSALPLSDRTFRKKPSSSSSSSPNFVLRVR). A coiled-coil region spans residues 377-480 (QKAVDERVSQ…LDNTEQKIGA (104 aa)). Positions 574–595 (INPPLPTSSPATSSMFPDRKLP) are disordered.

Belongs to the chaperonin (HSP60) family. As to quaternary structure, part of the Cpn60 complex composed of 7 alpha and 7 beta subunits. Can also form a complex composed of 14 beta subunits only. Both complexes show ATPase activity. The Cpn60 complex interacts with the Cpn10 complex. Interacts with NDHH.

It is found in the plastid. The protein localises to the chloroplast stroma. Its function is as follows. Involved specifically in the folding of NDHH, a subunit of the chloroplast NADH dehydrogenase-like complex (NDH). The polypeptide is Chaperonin 60 subunit beta 4, chloroplastic (CPN60B4) (Arabidopsis thaliana (Mouse-ear cress)).